The sequence spans 433 residues: Enolase (433 aa).

Gln167 is a binding site for (2R)-2-phosphoglycerate. The active-site Proton donor is Glu209. Mg(2+)-binding residues include Asp246, Glu291, and Asp318. 4 residues coordinate (2R)-2-phosphoglycerate: Lys343, Arg372, Ser373, and Lys394. The active-site Proton acceptor is the Lys343.

It belongs to the enolase family. Component of the RNA degradosome, a multiprotein complex involved in RNA processing and mRNA degradation. Mg(2+) serves as cofactor.

Its subcellular location is the cytoplasm. The protein localises to the secreted. It is found in the cell surface. It carries out the reaction (2R)-2-phosphoglycerate = phosphoenolpyruvate + H2O. It functions in the pathway carbohydrate degradation; glycolysis; pyruvate from D-glyceraldehyde 3-phosphate: step 4/5. Functionally, catalyzes the reversible conversion of 2-phosphoglycerate (2-PG) into phosphoenolpyruvate (PEP). It is essential for the degradation of carbohydrates via glycolysis. This is Enolase from Vibrio vulnificus (strain YJ016).